The chain runs to 189 residues: Gluconokinase (189 aa).

16-23 contributes to the ATP binding site; the sequence is GVSGAGKS.

The protein belongs to the gluconokinase GntK/GntV family. Monomer.

The catalysed reaction is D-gluconate + ATP = 6-phospho-D-gluconate + ADP + H(+). It participates in carbohydrate acid metabolism; D-gluconate degradation. Its function is as follows. Phosphorylates gluconate to 6-phosphogluconate. This chain is Gluconokinase, found in Arabidopsis thaliana (Mouse-ear cress).